Reading from the N-terminus, the 356-residue chain is Peptide methionine sulfoxide reductase MsrA/MsrB (356 aa).

Residues 46-199 (HEIYLAGGCF…PNGYCHIDLE (154 aa)) form a peptide methionine sulfoxide reductase A region. C54 is an active-site residue. In terms of domain architecture, MsrB spans 216–339 (DAELKAKLTP…NSAAVKFIPL (124 aa)). Catalysis depends on C328, which acts as the Nucleophile.

This sequence in the N-terminal section; belongs to the MsrA Met sulfoxide reductase family. In the C-terminal section; belongs to the MsrB Met sulfoxide reductase family.

It carries out the reaction L-methionyl-[protein] + [thioredoxin]-disulfide + H2O = L-methionyl-(S)-S-oxide-[protein] + [thioredoxin]-dithiol. It catalyses the reaction [thioredoxin]-disulfide + L-methionine + H2O = L-methionine (S)-S-oxide + [thioredoxin]-dithiol. The catalysed reaction is L-methionyl-[protein] + [thioredoxin]-disulfide + H2O = L-methionyl-(R)-S-oxide-[protein] + [thioredoxin]-dithiol. Has an important function as a repair enzyme for proteins that have been inactivated by oxidation. Catalyzes the reversible oxidation-reduction of methionine sulfoxide in proteins to methionine. The sequence is that of Peptide methionine sulfoxide reductase MsrA/MsrB (msrAB) from Aggregatibacter actinomycetemcomitans (Actinobacillus actinomycetemcomitans).